The sequence spans 385 residues: uncharacterized protein (385 aa).

This sequence belongs to the phage portal family. HK97 subfamily.

This is an uncharacterized protein from Rickettsia felis (strain ATCC VR-1525 / URRWXCal2) (Rickettsia azadi).